Here is a 481-residue protein sequence, read N- to C-terminus: Amino acid permease 6 (481 aa).

The Cytoplasmic segment spans residues 1–36; that stretch reads MEKKKSMFVEQSFPEHEIGDTNKNFDEDGRDKRTGT. 2 helical membrane-spanning segments follow: residues 37 to 57 and 58 to 78; these read WMTG…LSLA and WAIA…FSFI. Topologically, residues 79 to 125 are cytoplasmic; that stretch reads TYFTSTMLADCYRSPDPVTGKRNYTYMEVVRSYLGGRKVQLCGLAQY. Residues 126–146 form a helical membrane-spanning segment; sequence GNLIGITIGYTITASISMVAV. The Extracellular segment spans residues 147-167; that stretch reads KRSNCFHKNGHNVKCATSNTP. The chain crosses the membrane as a helical span at residues 168 to 188; the sequence is FMIIFAIIQIILSQIPNFHNL. At 189–190 the chain is on the cytoplasmic side; sequence SW. The helical transmembrane segment at 191–211 threads the bilayer; that stretch reads LSILAAVMSFCYASIGVGLSI. Topologically, residues 212 to 242 are extracellular; the sequence is AKAAGGGEHVRTTLTGVTVGIDVSGAEKIWR. The helical transmembrane segment at 243 to 263 threads the bilayer; it reads TFQAIGDIAFAYAYSTVLIEI. Over 264-283 the chain is Cytoplasmic; the sequence is QDTLKAGPPSENKAMKRASL. A helical transmembrane segment spans residues 284 to 304; it reads VGVSTTTFFYMLCGCVGYAAF. Topologically, residues 305–321 are extracellular; the sequence is GNDAPGNFLTGFGFYEP. A helical transmembrane segment spans residues 322–342; that stretch reads FWLIDFANVCIAVHLIGAYQV. Residues 343 to 385 are Cytoplasmic-facing; sequence FCQPIFQFVESQSAKRWPDNKFITGEYKIHVPCCGDFSINFLR. Residues 386–405 traverse the membrane as a helical segment; it reads LVWRTSYVVVTAVVAMIFPF. The Extracellular portion of the chain corresponds to 406–408; sequence FND. A helical transmembrane segment spans residues 409-427; sequence FLGLIGAASFWPLTVYFPI. Topologically, residues 428–447 are cytoplasmic; that stretch reads EMHIAQKKIPKFSFTWTWLK. A helical membrane pass occupies residues 448–468; it reads ILSWTCFIVSLVAAAGSVQGL. Topologically, residues 469 to 481 are extracellular; the sequence is IQSLKDFKPFQAP.

The protein belongs to the amino acid/polyamine transporter 2 family. Amino acid/auxin permease (AAAP) (TC 2.A.18.2) subfamily. As to expression, expressed in roots and leaves, and at lower levels in stems and flowers. Found in the xylem parenchyma.

The protein localises to the cell membrane. Its function is as follows. Amino acid-proton symporter. Stereospecific transporter with a broad specificity for tryptophan, proline, and neutral and acidic amino acids. Has an affinity for aspartate in a physiological range. Involved in the uptake of amino acids diffusing out of the xylem tracheids into the xylem parenchyma. The sequence is that of Amino acid permease 6 (AAP6) from Arabidopsis thaliana (Mouse-ear cress).